A 437-amino-acid polypeptide reads, in one-letter code: Nuclear envelope integral membrane protein 1 (437 aa).

The first 44 residues, 1-44 (MAGGIKVSVWSAVGPGPRCWGAGGGGGATWLLLVVAGCVVCGSA), serve as a signal peptide directing secretion. Residue N123 is glycosylated (N-linked (GlcNAc...) asparagine). 5 helical membrane-spanning segments follow: residues 159–179 (PKLF…DLLS), 183–203 (IFYY…IVIF), 214–234 (PIYV…QLVF), 244–264 (YWHY…AVCY), and 288–308 (GLMY…VIAL). Positions 184–295 (FYYSTGMSVG…GLGLMYSSIQ (112 aa)) are a; required for its colocalization with lamins at the nuclear envelope. Residues 334 to 403 (PVPPRLLTEE…LTPNEVSVHE (70 aa)) form a b; required for interaction with RAN-GTP region. Residues 334–437 (PVPPRLLTEE…PTFTQNNFLT (104 aa)) form a required for nuclear localization region. A phosphoserine mark is found at S366, S419, and S420. Residues 415–425 (DEELSSEEEGS) show a composition bias toward acidic residues. The tract at residues 415–437 (DEELSSEEEGSEYPTFTQNNFLT) is disordered. The segment covering 428-437 (PTFTQNNFLT) has biased composition (polar residues).

The protein belongs to the NEMP family. As to quaternary structure, homooligomer. Interacts with RAN-GTP. Interacts with EMD. In terms of processing, phosphorylated. Phosphorylation may regulate its interaction with RAN-GTP. In terms of tissue distribution, in the ovary, expression is strongest in primordial follicle oocytes and rapidly declines as oocytes mature and move from the cortex (at protein level).

It localises to the nucleus inner membrane. The protein localises to the nucleus envelope. Functionally, together with EMD, contributes to nuclear envelope stiffness in germ cells. Required for female fertility. Essential for normal erythropoiesis. Required for efficient nuclear envelope opening and enucleation during the late stages of erythroblast maturation. In Mus musculus (Mouse), this protein is Nuclear envelope integral membrane protein 1 (Nemp1).